A 733-amino-acid polypeptide reads, in one-letter code: Centrosomal protein of 68 kDa (733 aa).

Basic and acidic residues predominate over residues 71–80; the sequence is SKEPVADRSK. Disordered regions lie at residues 71-92, 150-207, and 222-244; these read SKEP…SASV, GLSQ…SFAN, and VVGA…DATG. A compositionally biased stretch (low complexity) spans 178–190; the sequence is SSRSISASSVGSS. Residues 231-241 show a composition bias toward polar residues; that stretch reads GSAQPLTSGSD. Phosphoserine is present on Ser-315. Positions 420–442 are disordered; the sequence is PQLKTKEKEPPFPRQKRGRQHVS. Residues Ser-453 and Ser-459 each carry the phosphoserine modification. Residues 497-571 form a disordered region; it reads HSSLQVSDSD…KPLKTQPASK (75 aa). A compositionally biased stretch (polar residues) spans 540–569; that stretch reads IQPQDSRGKSSLMSNQTLGVSSKPLKTQPA.

As to quaternary structure, interacts with CNTLN; the interaction recruits CEP68 to the centrosome. Interacts with the SCF(FBXW11) complex which contains SKP1, CUL1 and FBXW11; the interaction is probably mediated by FBXW11 and the complex also contains CDK5RAP2 and PCNT. Also interacts with F-box protein BTRC. Interacts with serine/threonine-protein kinase PLK1; the interaction leads to phosphorylation of CEP68 and its subsequent degradation. Interacts with NEK2; the interaction leads to phosphorylation of CEP68. Post-translationally, phosphorylation by PLK1 is required for binding to BTRC in prometaphase. Phosphorylated directly or indirectly by NEK2. NEK2-mediated phosphorylation promotes CEP68 dissociation from the centrosome and its degradation at the onset of mitosis. Ubiquitinated and targeted for proteasomal degradation in early mitosis by the SCF(BTRC) and/or SCF(FBXW11) E3 ubiquitin-protein ligase complexes. Degradation is complete by prometaphase and is required for removal of CDK5RAP2 from the peripheral pericentriolar material and subsequent centriole separation.

Its subcellular location is the cytoplasm. It is found in the cytoskeleton. It localises to the microtubule organizing center. The protein localises to the centrosome. Involved in maintenance of centrosome cohesion, probably as part of a linker structure which prevents centrosome splitting. Required for localization of CDK5RAP2 to the centrosome during interphase. Contributes to CROCC/rootletin filament formation. The polypeptide is Centrosomal protein of 68 kDa (Cep68) (Mus musculus (Mouse)).